Reading from the N-terminus, the 101-residue chain is Small ribosomal subunit protein uS14 (101 aa).

The tract at residues 44–74 (ASRKLSRLPRDSSPVRLRNRDQVDGRPRGYV) is disordered. Basic and acidic residues predominate over residues 61-70 (RNRDQVDGRP).

This sequence belongs to the universal ribosomal protein uS14 family. In terms of assembly, part of the 30S ribosomal subunit. Contacts proteins S3 and S10.

Functionally, binds 16S rRNA, required for the assembly of 30S particles and may also be responsible for determining the conformation of the 16S rRNA at the A site. The chain is Small ribosomal subunit protein uS14 from Cutibacterium acnes (strain DSM 16379 / KPA171202) (Propionibacterium acnes).